A 473-amino-acid polypeptide reads, in one-letter code: 3-isopropylmalate dehydratase large subunit 2 (473 aa).

[4Fe-4S] cluster-binding residues include C350, C410, and C413.

The protein belongs to the aconitase/IPM isomerase family. LeuC type 1 subfamily. Heterodimer of LeuC and LeuD. It depends on [4Fe-4S] cluster as a cofactor.

The enzyme catalyses (2R,3S)-3-isopropylmalate = (2S)-2-isopropylmalate. It functions in the pathway amino-acid biosynthesis; L-leucine biosynthesis; L-leucine from 3-methyl-2-oxobutanoate: step 2/4. Functionally, catalyzes the isomerization between 2-isopropylmalate and 3-isopropylmalate, via the formation of 2-isopropylmaleate. The polypeptide is 3-isopropylmalate dehydratase large subunit 2 (Salmonella typhimurium (strain LT2 / SGSC1412 / ATCC 700720)).